A 79-amino-acid chain; its full sequence is Panulirin (79 aa).

Positions 1–22 (MKNKAVLMLMALFLVAVTQVHG) are cleaved as a signal peptide. The propeptide occupies 23 to 26 (DPEP). Disulfide bonds link Cys33-Cys63, Cys40-Cys56, and Cys46-Cys64. Positions 75-79 (QLLAA) are excised as a propeptide.

As to quaternary structure, monomer. Post-translationally, contains 3 disulfide bonds. In terms of tissue distribution, expressed in hemocytes (at protein level).

Its function is as follows. Involved in the melanization cascade in response to lipopolysaccharide (LPS). In vitro, reversibly and competitively inhibits trypsin (Ki=8.6 nM) but not serine proteases chymotrypsin, elastase, subtilisin, thrombin and plasmin, cysteine peptidase papain or metallopeptidase carboxypeptidase A. This is Panulirin from Panulirus argus (Caribbean spiny lobster).